The primary structure comprises 351 residues: Spermidine/putrescine import ATP-binding protein PotA (351 aa).

In terms of domain architecture, ABC transporter spans 6 to 236 (LELRNVTKEY…PENAWVANFI (231 aa)). 38 to 45 (GPSGCGKT) contacts ATP.

This sequence belongs to the ABC transporter superfamily. Spermidine/putrescine importer (TC 3.A.1.11.1) family. The complex is composed of two ATP-binding proteins (PotA), two transmembrane proteins (PotB and PotC) and a solute-binding protein (PotD).

It is found in the cell membrane. The enzyme catalyses ATP + H2O + polyamine-[polyamine-binding protein]Side 1 = ADP + phosphate + polyamineSide 2 + [polyamine-binding protein]Side 1.. Functionally, part of the ABC transporter complex PotABCD involved in spermidine/putrescine import. Responsible for energy coupling to the transport system. This is Spermidine/putrescine import ATP-binding protein PotA from Mycoplasma capricolum subsp. capricolum (strain California kid / ATCC 27343 / NCTC 10154).